The sequence spans 798 residues: MAASLPGPGSRLFRTYGAADGRRQRRPGREAAQWFPPQDRRRFFNSSGSSDASIGDPSQSDDPDDPDDPDFPGSPVRRRRRRPGGRVPKDRPSLTVTPKRWKLRARPSLTVTPRRLGLRARPPQKCSTPCGPLRLPPFPSRDSGRLSPDLSVCGQPRDGDELGISASLFSSLASPCPGSPTPRDSVISIGTSACLVAASAVPSGLHLPEVSLDRASLPCSQEEATGGAKDTRMVHQTRASLRSVLFGLMNSGTPEDSEFRADGKNMRESCCKRKLVVGNGPEGPGLSSTGKRRATGQDSCQERGLQEAVRREHQEASVPKGRIVPRGIDRLERTRSSRKSKHQEATETSLLHSHRFKKGQKLGKDSFPTQDLTPLQNVCFWTKTRASFSFHKKKIVTDVSEVCSIYTTATSLSGSLLSECSNRPVMNRTSGAPSSWHSSSMYLLSPLNTLSISNKKASDAEKVYGECSQKGPVPFSHCLPTEKLQRCEKIGEGVFGEVFQTIADHTPVAIKIIAIEGPDLVNGSHQKTFEEILPEIIISKELSLLSGEVCNRTEGFIGLNSVHCVQGSYPPLLLKAWDHYNSTKGSANDRPDFFKDDQLFIVLEFEFGGIDLEQMRTKLSSLATAKSILHQLTASLAVAEASLRFEHRDLHWGNVLLKKTSLKKLHYTLNGKSSTIPSCGLQVSIIDYTLSRLERDGIVVFCDVSMDEDLFTGDGDYQFDIYRLMKKENNNRWGEYHPYSNVLWLHYLTDKMLKQMTFKTKCNTPAMKQIKRKIQEFHRTMLNFSSATDLLCQHSLFK.

The tract at residues 1-110 (MAASLPGPGS…WKLRARPSLT (110 aa)) is disordered. Serine 58 is subject to Phosphoserine. The span at 59–70 (QSDDPDDPDDPD) shows a compositional bias: acidic residues. Position 93 is a phosphoserine; by AURKB (serine 93). Threonine 97 carries the phosphothreonine modification. Serine 143 carries the phosphoserine; by AURKB modification. Serine 147 carries the phosphoserine modification. Residues 275-350 (LVVGNGPEGP…KHQEATETSL (76 aa)) form a disordered region. A compositionally biased stretch (basic and acidic residues) spans 300 to 315 (CQERGLQEAVRREHQE). In terms of domain architecture, Protein kinase spans 484–798 (LQRCEKIGEG…DLLCQHSLFK (315 aa)). Residues 490-498 (IGEGVFGEV), lysine 511, 606-611 (EFGGID), 649-654 (DLHWGN), and 687-689 (DYT) contribute to the ATP site. Aspartate 649 serves as the catalytic Proton acceptor.

It belongs to the protein kinase superfamily. Ser/Thr protein kinase family. Haspin subfamily. Mg(2+) serves as cofactor. Autophosphorylated on both serine and threonine residues. Strongly phosphorylated during mitosis but this does not appear to significantly affect its intrinsic kinase activity. Phosphorylation by AURKB is required for full activity toward histone H3 at 'Ser-3' in mitosis. As to expression, strongly expressed in testis. Also present in thymus and bone marrow and low levels observed in prostate, intestine, lung, spleen and lymph node. Expressed in fetal skin, liver, kidney and small intestine and also in proliferating but not non-proliferating cell lines.

The protein localises to the nucleus. Its subcellular location is the chromosome. It is found in the cytoplasm. The protein resides in the cytoskeleton. It localises to the spindle. It carries out the reaction L-seryl-[protein] + ATP = O-phospho-L-seryl-[protein] + ADP + H(+). The catalysed reaction is L-threonyl-[protein] + ATP = O-phospho-L-threonyl-[protein] + ADP + H(+). Its activity is regulated as follows. Constitutive activity that does not require phosphorylation. Specifically inhibited by 3-(1H-indazol-5-yl)-N-propylimidazo[1,2-b]pyridazin-6-amine (CHR-6494). In terms of biological role, serine/threonine-protein kinase that phosphorylates histone H3 at 'Thr-3' (H3T3ph) during mitosis. May act through H3T3ph to both position and modulate activation of AURKB and other components of the chromosomal passenger complex (CPC) at centromeres to ensure proper chromatid cohesion, metaphase alignment and normal progression through the cell cycle. The chain is Serine/threonine-protein kinase haspin from Homo sapiens (Human).